The primary structure comprises 149 residues: Calmodulin (149 aa).

Alanine 2 is modified (N-acetylalanine). 4 EF-hand domains span residues glutamate 8 to asparagine 43, proline 44 to aspartate 79, aspartate 81 to lysine 116, and leucine 117 to lysine 149. Residues aspartate 21, aspartate 23, aspartate 25, threonine 27, glutamate 32, aspartate 57, aspartate 59, asparagine 61, threonine 63, glutamate 68, aspartate 94, aspartate 96, asparagine 98, and glutamate 105 each contribute to the Ca(2+) site. Lysine 116 carries the post-translational modification N6,N6,N6-trimethyllysine. Ca(2+) contacts are provided by aspartate 130, aspartate 132, aspartate 134, glutamine 136, and glutamate 141.

Belongs to the calmodulin family.

In terms of biological role, calmodulin mediates the control of a large number of enzymes, ion channels and other proteins by Ca(2+). Among the enzymes to be stimulated by the calmodulin-Ca(2+) complex are a number of protein kinases and phosphatases. The protein is Calmodulin of Metridium senile (Brown sea anemone).